The following is a 1043-amino-acid chain: Rho GTPase-activating protein gacZ (1043 aa).

The disordered stretch occupies residues methionine 1–isoleucine 44. Low complexity predominate over residues asparagine 14 to isoleucine 44. Zn(2+) is bound by residues cysteine 71, cysteine 74, cysteine 82, cysteine 85, cysteine 91, histidine 95, histidine 103, and cysteine 107. The segment at cysteine 71–cysteine 107 adopts an MYND-type; atypical zinc-finger fold. Disordered regions lie at residues serine 137–asparagine 163, histidine 199–asparagine 532, aspartate 546–arginine 594, phenylalanine 614–asparagine 690, asparagine 706–alanine 772, and asparagine 801–asparagine 842. The segment covering glutamine 201–proline 225 has biased composition (low complexity). Residues serine 241–isoleucine 253 show a composition bias toward polar residues. 2 stretches are compositionally biased toward low complexity: residues asparagine 254–glycine 293 and asparagine 307–glutamate 411. Residues glycine 453–phenylalanine 466 show a composition bias toward polar residues. Low complexity-rich tracts occupy residues asparagine 467–asparagine 532 and glycine 547–arginine 594. Positions tyrosine 615–tyrosine 625 are enriched in polar residues. Acidic residues predominate over residues glutamate 644–aspartate 671. 4 stretches are compositionally biased toward low complexity: residues aspartate 726–threonine 736, serine 752–serine 771, asparagine 801–asparagine 821, and asparagine 829–asparagine 842. Residues aspartate 825–isoleucine 852 adopt a coiled-coil conformation. The 189-residue stretch at isoleucine 855–serine 1043 folds into the Rho-GAP domain.

The protein resides in the cytoplasm. In terms of biological role, rho GTPase-activating protein involved in the signal transduction pathway. The protein is Rho GTPase-activating protein gacZ (gacZ) of Dictyostelium discoideum (Social amoeba).